Reading from the N-terminus, the 159-residue chain is Voltage-dependent N-type calcium channel subunit alpha-1B (159 aa).

A helical membrane pass occupies residues 1-5; it reads LVTEI. An IV repeat occupies 1 to 159; it reads LVTEIADTDN…LMLNLFVAVI (159 aa). Over 6–13 the chain is Extracellular; it reads ADTDNFIN. Residue N13 is glycosylated (N-linked (GlcNAc...) asparagine). A helical membrane pass occupies residues 14–32; that stretch reads LSFLRLFRAARLIKLLRQG. At 33 to 51 the chain is on the cytoplasmic side; it reads YTIRILLWTFVQSFKALPY. A helical membrane pass occupies residues 52-71; that stretch reads VCLLIAMLFFIYAIIGMQVF. At 72 to 135 the chain is on the extracellular side; the sequence is GNIALNDETS…LTKNECGSDF (64 aa). A helical transmembrane segment spans residues 136–155; that stretch reads AYFYFVSFIFLCSFLMLNLF. Residues 156–159 lie on the Cytoplasmic side of the membrane; it reads VAVI.

The protein belongs to the calcium channel alpha-1 subunit (TC 1.A.1.11) family. CACNA1B subfamily. As to quaternary structure, multisubunit complex consisting of alpha-1, alpha-2, beta and delta subunits in a 1:1:1:1 ratio. The channel activity is directed by the pore-forming and voltage-sensitive alpha-1 subunit. In many cases, this subunit is sufficient to generate voltage-sensitive calcium channel activity. The auxiliary subunits beta and alpha-2/delta linked by a disulfide bridge regulate the channel activity. Interacts with RIMBP2. In terms of processing, phosphorylated in vitro by CaM-kinase II, PKA, PKC and CGPK.

Its subcellular location is the membrane. The enzyme catalyses Ca(2+)(in) = Ca(2+)(out). Its function is as follows. Voltage-sensitive calcium channels (VSCC) mediate the entry of calcium ions into excitable cells and are also involved in a variety of calcium-dependent processes, including muscle contraction, hormone or neurotransmitter release, gene expression, cell motility, cell division and cell death. This alpha-1B subunit gives rise to N-type calcium currents. N-type calcium channels belong to the 'high-voltage activated' (HVA) group. They are involved in pain signaling. Calcium channels containing alpha-1B subunit may play a role in directed migration of immature neurons. Mediates Ca(2+) release probability at hippocampal neuronal soma and synaptic terminals. This Gallus gallus (Chicken) protein is Voltage-dependent N-type calcium channel subunit alpha-1B (CACNA1B).